The following is a 70-amino-acid chain: DNA gyrase inhibitor YacG (70 aa).

Cysteine 7, cysteine 10, cysteine 26, and cysteine 30 together coordinate Zn(2+).

Belongs to the DNA gyrase inhibitor YacG family. In terms of assembly, interacts with GyrB. The cofactor is Zn(2+).

Its function is as follows. Inhibits all the catalytic activities of DNA gyrase by preventing its interaction with DNA. Acts by binding directly to the C-terminal domain of GyrB, which probably disrupts DNA binding by the gyrase. This is DNA gyrase inhibitor YacG from Shewanella woodyi (strain ATCC 51908 / MS32).